The primary structure comprises 216 residues: Probable nicotinate-nucleotide adenylyltransferase (216 aa).

It belongs to the NadD family.

The enzyme catalyses nicotinate beta-D-ribonucleotide + ATP + H(+) = deamido-NAD(+) + diphosphate. The protein operates within cofactor biosynthesis; NAD(+) biosynthesis; deamido-NAD(+) from nicotinate D-ribonucleotide: step 1/1. Functionally, catalyzes the reversible adenylation of nicotinate mononucleotide (NaMN) to nicotinic acid adenine dinucleotide (NaAD). This chain is Probable nicotinate-nucleotide adenylyltransferase, found in Geobacillus thermodenitrificans (strain NG80-2).